Consider the following 508-residue polypeptide: Lysine--tRNA ligase (508 aa).

Glu-416 and Glu-423 together coordinate Mg(2+).

This sequence belongs to the class-II aminoacyl-tRNA synthetase family. In terms of assembly, homodimer. Mg(2+) serves as cofactor.

Its subcellular location is the cytoplasm. The catalysed reaction is tRNA(Lys) + L-lysine + ATP = L-lysyl-tRNA(Lys) + AMP + diphosphate. This chain is Lysine--tRNA ligase, found in Prochlorococcus marinus (strain MIT 9313).